Reading from the N-terminus, the 452-residue chain is Probable glycine dehydrogenase (decarboxylating) subunit 1 (452 aa).

Belongs to the GcvP family. N-terminal subunit subfamily. As to quaternary structure, the glycine cleavage system is composed of four proteins: P, T, L and H. In this organism, the P 'protein' is a heterodimer of two subunits.

It catalyses the reaction N(6)-[(R)-lipoyl]-L-lysyl-[glycine-cleavage complex H protein] + glycine + H(+) = N(6)-[(R)-S(8)-aminomethyldihydrolipoyl]-L-lysyl-[glycine-cleavage complex H protein] + CO2. Its function is as follows. The glycine cleavage system catalyzes the degradation of glycine. The P protein binds the alpha-amino group of glycine through its pyridoxal phosphate cofactor; CO(2) is released and the remaining methylamine moiety is then transferred to the lipoamide cofactor of the H protein. The protein is Probable glycine dehydrogenase (decarboxylating) subunit 1 of Novosphingobium aromaticivorans (strain ATCC 700278 / DSM 12444 / CCUG 56034 / CIP 105152 / NBRC 16084 / F199).